A 312-amino-acid polypeptide reads, in one-letter code: Methionyl-tRNA formyltransferase (312 aa).

A (6S)-5,6,7,8-tetrahydrofolate-binding site is contributed by 107–110 (SLLP).

The protein belongs to the Fmt family.

It carries out the reaction L-methionyl-tRNA(fMet) + (6R)-10-formyltetrahydrofolate = N-formyl-L-methionyl-tRNA(fMet) + (6S)-5,6,7,8-tetrahydrofolate + H(+). Attaches a formyl group to the free amino group of methionyl-tRNA(fMet). The formyl group appears to play a dual role in the initiator identity of N-formylmethionyl-tRNA by promoting its recognition by IF2 and preventing the misappropriation of this tRNA by the elongation apparatus. The sequence is that of Methionyl-tRNA formyltransferase from Endomicrobium trichonymphae.